Consider the following 295-residue polypeptide: Ankyrin repeat and SOCS box protein 17 (295 aa).

An ANK repeat occupies 146 to 176 (SGITPLFYVAQTRQSNIFKILLQYGILEREK). Residues 232-295 (LGRHPIISNW…RLQNYLNLEI (64 aa)) enclose the SOCS box domain.

This sequence belongs to the ankyrin SOCS box (ASB) family. In terms of tissue distribution, specifically expressed in testis. Not detected in other tissues tested.

It functions in the pathway protein modification; protein ubiquitination. Its function is as follows. May be a substrate-recognition component of a SCF-like ECS (Elongin-Cullin-SOCS-box protein) E3 ubiquitin-protein ligase complex which mediates the ubiquitination and subsequent proteasomal degradation of target proteins. The chain is Ankyrin repeat and SOCS box protein 17 (ASB17) from Homo sapiens (Human).